A 180-amino-acid polypeptide reads, in one-letter code: Small ribosomal subunit protein uS4 (180 aa).

Positions 103–165 (RRLQTLVYKK…KNSPFAKESH (63 aa)) constitute an S4 RNA-binding domain.

It belongs to the universal ribosomal protein uS4 family. Part of the 30S ribosomal subunit. Contacts protein S5. The interaction surface between S4 and S5 is involved in control of translational fidelity.

Functionally, one of the primary rRNA binding proteins, it binds directly to 16S rRNA where it nucleates assembly of the body of the 30S subunit. Its function is as follows. With S5 and S12 plays an important role in translational accuracy. In Thermococcus gammatolerans (strain DSM 15229 / JCM 11827 / EJ3), this protein is Small ribosomal subunit protein uS4.